A 346-amino-acid polypeptide reads, in one-letter code: DnaJ protein ERDJ3B (346 aa).

A signal peptide spans 1 to 23; that stretch reads MAIRWSELCIVLFALSYAICVLA. In terms of domain architecture, J spans 26 to 91; the sequence is SYYDVLQVPK…EKREIYNKYG (66 aa). N267 carries an N-linked (GlcNAc...) asparagine glycan.

Interacts with SDF2 and MED37A/BIP1. In terms of processing, N-glycosylated. In terms of tissue distribution, expressed in leaves, flower buds and flowers.

It is found in the endoplasmic reticulum lumen. Its function is as follows. Regulates protein folding in the endoplasmic reticulum (ER) lumen. Forms a complex in the ER with SDF2 and MED37A/BIP1 which is required for the proper accumulation and function of the surface-exposed leucine-rich repeat receptor kinases EFR involved in pathogen-associated molecular pattern (PAMP) triggered immunity. The sequence is that of DnaJ protein ERDJ3B (ERDJ3B) from Arabidopsis thaliana (Mouse-ear cress).